The sequence spans 2885 residues: E3 ubiquitin-protein ligase hyd (2885 aa).

Positions 83–138 (SDAKCSTSGGSGTASASKAPSSSRPMARSRARLLRATGRSNSTGQGSGSRSTGVII) are disordered. Composition is skewed to low complexity over residues 95–108 (TASASKAPSSSRPM) and 116–138 (LRATGRSNSTGQGSGSRSTGVII). One can recognise a UBA domain in the interval 154–196 (YVPEELISQAEVVLQGKSRNLIIRELQRTNLDVNLAVNNLLSR). Residues 266–276 (ANANAADSNQS) show a composition bias toward low complexity. Disordered stretches follow at residues 266–291 (ANANAADSNQSTTRSTSSGTALTGNS), 580–664 (NNLN…GRKD), and 711–731 (AATSSTSNTASTSKEEGKEDD). Polar residues-rich tracts occupy residues 277–291 (TTRSTSSGTALTGNS) and 598–615 (AMPSTGSSKNGQSFSNSK). Residues Ser-628 and Ser-631 each carry the phosphoserine modification. A compositionally biased stretch (basic and acidic residues) spans 650–664 (TTKEDSNAPQEGRKD). Residues 711 to 722 (AATSSTSNTAST) show a composition bias toward low complexity. Residue Ser-967 is modified to Phosphoserine. Residues 1008–1032 (ASSSNENSSFATMSSSAAGSASSTS) are compositionally biased toward low complexity. Residues 1008–1035 (ASSSNENSSFATMSSSAAGSASSTSRDN) form a disordered region. Residues 1217–1285 (DTCSFTWTGA…EKCKCKALIA (69 aa)) form a UBR-type zinc finger. A Phosphoserine modification is found at Ser-1362. The interval 1642–1761 (NEDGMQDDES…IRSRDTARSS (120 aa)) is disordered. The span at 1669-1681 (NQSNQEVQRSVQA) shows a compositional bias: polar residues. The segment covering 1696–1721 (LEDESGDSSAQEEDGSEDGESDDQSD) has biased composition (acidic residues). Residues 1735 to 1749 (TNSNARSDLAPQTMQ) show a composition bias toward polar residues. Ser-2037 is modified (phosphoserine). The interval 2124-2143 (IDSSKTGDGNVTNKAEGSTD) is disordered. Ser-2183 is subject to Phosphoserine. Residues 2473–2492 (NLDARPYTPPNSSDNATPES) are disordered. The span at 2482–2492 (PNSSDNATPES) shows a compositional bias: polar residues. In terms of domain architecture, PABC spans 2484 to 2561 (SSDNATPESL…AIEIITFKQK (78 aa)). Ser-2574 is subject to Phosphoserine. In terms of domain architecture, HECT spans 2782-2885 (FNDESSEGPD…AIKSKNFGFV (104 aa)). Cys-2854 (glycyl thioester intermediate) is an active-site residue.

The protein belongs to the UBR5 family.

It localises to the nucleus. It is found in the cytoplasm. The enzyme catalyses S-ubiquitinyl-[E2 ubiquitin-conjugating enzyme]-L-cysteine + [acceptor protein]-L-lysine = [E2 ubiquitin-conjugating enzyme]-L-cysteine + N(6)-ubiquitinyl-[acceptor protein]-L-lysine.. It functions in the pathway protein modification; protein ubiquitination. Its function is as follows. E3 ubiquitin-protein ligase which accepts ubiquitin from an E2 ubiquitin-conjugating enzyme in the form of a thioester and then directly transfers the ubiquitin to targeted substrate. Required for regulation of cell proliferation in imaginal disks and germ cells. Acts as a negative regulator of hh, ci and dpp expression in the anterior of the eye disk. Acts as a positive regulator of the canonical Wnt signaling pathway by mediating ubiquitination and degradation of gro. Catalyzes 'Lys-63'-linked polyubiquitination of akirin, thereby activating the immune deficiency pathway (Imd). This is E3 ubiquitin-protein ligase hyd (hyd) from Drosophila melanogaster (Fruit fly).